The following is a 309-amino-acid chain: Transcriptional regulator HilD (309 aa).

In terms of domain architecture, HTH araC/xylS-type spans 209-306 (ERVYNIISSS…KTTPSTFIKM (98 aa)). 2 consecutive DNA-binding regions (H-T-H motif) follow at residues 226-247 (TDVA…AEEG) and 273-296 (VNAV…KKYF).

This is Transcriptional regulator HilD (hilD) from Salmonella typhimurium (strain SL1344).